A 159-amino-acid chain; its full sequence is Large ribosomal subunit protein uL15 (159 aa).

Positions 1–18 (MKLNEIKDNEGSSKDRIR) are enriched in basic and acidic residues. Residues 1–39 (MKLNEIKDNEGSSKDRIRVGRGIGSGKGKTGGRGVKGQK) form a disordered region. Over residues 21–35 (RGIGSGKGKTGGRGV) the composition is skewed to gly residues.

It belongs to the universal ribosomal protein uL15 family. In terms of assembly, part of the 50S ribosomal subunit.

Binds to the 23S rRNA. This Allorhizobium ampelinum (strain ATCC BAA-846 / DSM 112012 / S4) (Agrobacterium vitis (strain S4)) protein is Large ribosomal subunit protein uL15.